The primary structure comprises 335 residues: Erlin-2-A (335 aa).

Topologically, residues 1–2 are cytoplasmic; that stretch reads MS. The chain crosses the membrane as a helical span at residues 3–23; it reads HAGAIVGLGVALIAAALFSAI. Residues 24 to 335 are Lumenal-facing; sequence HKIEEGHVGV…GLDEAASAEE (312 aa). N106 carries an N-linked (GlcNAc...) asparagine glycan.

Belongs to the band 7/mec-2 family.

It localises to the endoplasmic reticulum membrane. Mediates the endoplasmic reticulum-associated degradation (ERAD) of inositol 1,4,5-trisphosphate receptors (IP3Rs). Promotes sterol-accelerated ERAD of HMGCR. Involved in regulation of cellular cholesterol homeostasis by regulation the SREBP signaling pathway. The protein is Erlin-2-A (erlin2-a) of Xenopus laevis (African clawed frog).